The following is a 433-amino-acid chain: Aspartate--tRNA(Asp/Asn) ligase (433 aa).

Residue E167 coordinates L-aspartate. The segment at 189 to 192 is aspartate; that stretch reads QLFK. R211 is an L-aspartate binding site. Residues 211–213, 219–221, and E356 contribute to the ATP site; these read RAE and RHL. Mg(2+) contacts are provided by E356 and S359. L-aspartate is bound by residues S359 and R363. 404–407 is a binding site for ATP; it reads GGER.

This sequence belongs to the class-II aminoacyl-tRNA synthetase family. Type 2 subfamily. As to quaternary structure, homodimer. Mg(2+) is required as a cofactor.

It is found in the cytoplasm. It catalyses the reaction tRNA(Asx) + L-aspartate + ATP = L-aspartyl-tRNA(Asx) + AMP + diphosphate. Aspartyl-tRNA synthetase with relaxed tRNA specificity since it is able to aspartylate not only its cognate tRNA(Asp) but also tRNA(Asn). Reaction proceeds in two steps: L-aspartate is first activated by ATP to form Asp-AMP and then transferred to the acceptor end of tRNA(Asp/Asn). The chain is Aspartate--tRNA(Asp/Asn) ligase from Haloferax volcanii (Halobacterium volcanii).